The primary structure comprises 388 residues: Chorismate synthase (388 aa).

Residues R39 and R45 each coordinate NADP(+). Residues 132–134 (RSS), 251–252 (NA), G296, 311–315 (KPIPT), and R337 contribute to the FMN site.

It belongs to the chorismate synthase family. As to quaternary structure, homotetramer. Requires FMNH2 as cofactor.

The enzyme catalyses 5-O-(1-carboxyvinyl)-3-phosphoshikimate = chorismate + phosphate. It functions in the pathway metabolic intermediate biosynthesis; chorismate biosynthesis; chorismate from D-erythrose 4-phosphate and phosphoenolpyruvate: step 7/7. Catalyzes the anti-1,4-elimination of the C-3 phosphate and the C-6 proR hydrogen from 5-enolpyruvylshikimate-3-phosphate (EPSP) to yield chorismate, which is the branch point compound that serves as the starting substrate for the three terminal pathways of aromatic amino acid biosynthesis. This reaction introduces a second double bond into the aromatic ring system. This chain is Chorismate synthase, found in Staphylococcus aureus (strain Mu50 / ATCC 700699).